The chain runs to 120 residues: Small ribosomal subunit protein bS16 (120 aa).

Residues 81–120 form a disordered region; that stretch reads GLAKRPTRNNPQKAEPGEKAKERAAKRAEKAAAPAEDAAA. Basic and acidic residues predominate over residues 95–110; sequence EPGEKAKERAAKRAEK. The segment covering 111-120 has biased composition (low complexity); sequence AAAPAEDAAA.

It belongs to the bacterial ribosomal protein bS16 family.

This is Small ribosomal subunit protein bS16 from Methylorubrum extorquens (strain CM4 / NCIMB 13688) (Methylobacterium extorquens).